A 360-amino-acid chain; its full sequence is Phospho-N-acetylmuramoyl-pentapeptide-transferase (360 aa).

The next 10 helical transmembrane spans lie at 21-41 (YITV…LWIG), 73-93 (TMGG…WANL), 94-114 (ANSY…IGFV), 132-152 (WKYF…YWLG), 168-188 (IMPQ…VGTG), 199-219 (GLAI…AWAT), 239-259 (VVVF…FNTY), 263-283 (VFMG…VAIL), 288-308 (FLLV…ILQV), and 338-358 (VIIR…VTLK).

The protein belongs to the glycosyltransferase 4 family. MraY subfamily. The cofactor is Mg(2+).

The protein localises to the cell inner membrane. The catalysed reaction is UDP-N-acetyl-alpha-D-muramoyl-L-alanyl-gamma-D-glutamyl-meso-2,6-diaminopimeloyl-D-alanyl-D-alanine + di-trans,octa-cis-undecaprenyl phosphate = di-trans,octa-cis-undecaprenyl diphospho-N-acetyl-alpha-D-muramoyl-L-alanyl-D-glutamyl-meso-2,6-diaminopimeloyl-D-alanyl-D-alanine + UMP. It participates in cell wall biogenesis; peptidoglycan biosynthesis. Its function is as follows. Catalyzes the initial step of the lipid cycle reactions in the biosynthesis of the cell wall peptidoglycan: transfers peptidoglycan precursor phospho-MurNAc-pentapeptide from UDP-MurNAc-pentapeptide onto the lipid carrier undecaprenyl phosphate, yielding undecaprenyl-pyrophosphoryl-MurNAc-pentapeptide, known as lipid I. In Haemophilus influenzae (strain 86-028NP), this protein is Phospho-N-acetylmuramoyl-pentapeptide-transferase.